Reading from the N-terminus, the 423-residue chain is Gamma-glutamyl phosphate reductase (423 aa).

The protein belongs to the gamma-glutamyl phosphate reductase family.

The protein resides in the cytoplasm. It catalyses the reaction L-glutamate 5-semialdehyde + phosphate + NADP(+) = L-glutamyl 5-phosphate + NADPH + H(+). Its pathway is amino-acid biosynthesis; L-proline biosynthesis; L-glutamate 5-semialdehyde from L-glutamate: step 2/2. Catalyzes the NADPH-dependent reduction of L-glutamate 5-phosphate into L-glutamate 5-semialdehyde and phosphate. The product spontaneously undergoes cyclization to form 1-pyrroline-5-carboxylate. In Paramagnetospirillum magneticum (strain ATCC 700264 / AMB-1) (Magnetospirillum magneticum), this protein is Gamma-glutamyl phosphate reductase.